Consider the following 517-residue polypeptide: Legumin A (517 aa).

A signal peptide spans 1–21 (MAKLLALSLSFCFLLLGGCFA). 2 disulfides stabilise this stretch: Cys-31–Cys-64 and Cys-107–Cys-339. In terms of domain architecture, Cupin type-1 1 spans 36–232 (LDALEPDNRI…AFNVNRHIVD (197 aa)). Positions 249–335 (VKGGLSIISP…SRRQGDNGLE (87 aa)) are disordered. The region spanning 345–494 (LNIGPSSSPD…TFNLQRNEAR (150 aa)) is the Cupin type-1 2 domain.

It belongs to the 11S seed storage protein (globulins) family. Hexamer; each subunit is composed of an acidic and a basic chain derived from a single precursor and linked by a disulfide bond.

Its function is as follows. This protein found in the seeds of many leguminous and non-leguminous plants is the source of sulfur-containing amino acids in seed meals. This Pisum sativum (Garden pea) protein is Legumin A (LEGA).